A 196-amino-acid chain; its full sequence is Protein TEX261 (196 aa).

A run of 5 helical transmembrane segments spans residues 3-23, 42-62, 70-90, 97-117, and 125-145; these read FMYL…TLAV, SRII…LYVF, IGVG…FPFI, FILS…FFAE, and VLAY…VSLS.

Belongs to the SVP26 family.

The protein resides in the membrane. This is Protein TEX261 (TEX261) from Pongo abelii (Sumatran orangutan).